The primary structure comprises 121 residues: Large ribosomal subunit protein uL18 (121 aa).

Belongs to the universal ribosomal protein uL18 family. As to quaternary structure, part of the 50S ribosomal subunit; part of the 5S rRNA/L5/L18/L25 subcomplex. Contacts the 5S and 23S rRNAs.

In terms of biological role, this is one of the proteins that bind and probably mediate the attachment of the 5S RNA into the large ribosomal subunit, where it forms part of the central protuberance. This chain is Large ribosomal subunit protein uL18, found in Acidovorax ebreus (strain TPSY) (Diaphorobacter sp. (strain TPSY)).